A 184-amino-acid chain; its full sequence is MPEPIQIAEEKMKKAIETLKEEFATVRAGRANPHILDKVMVDYYGVPTPIPQLASITVPEARMIVIQPWEARMLKEIEKAIQKADLGVNPANDGKVIRLIFPELTEERRKELVKQVKKMAEDAKVAIRNIRREAIDEYKKMKKNNEITEDDLKDAEEDVQKLHDKYIEQIEKLLSAKEKEIMEV.

Belongs to the RRF family.

It localises to the cytoplasm. Responsible for the release of ribosomes from messenger RNA at the termination of protein biosynthesis. May increase the efficiency of translation by recycling ribosomes from one round of translation to another. The sequence is that of Ribosome-recycling factor from Caldicellulosiruptor saccharolyticus (strain ATCC 43494 / DSM 8903 / Tp8T 6331).